The primary structure comprises 308 residues: Aspartate carbamoyltransferase catalytic subunit (308 aa).

Positions 50 and 51 each coordinate carbamoyl phosphate. Residue Lys78 participates in L-aspartate binding. The carbamoyl phosphate site is built by Arg100, His131, and Gln134. Positions 164 and 216 each coordinate L-aspartate. Carbamoyl phosphate is bound by residues Ala259 and Pro260.

It belongs to the aspartate/ornithine carbamoyltransferase superfamily. ATCase family. As to quaternary structure, heterododecamer (2C3:3R2) of six catalytic PyrB chains organized as two trimers (C3), and six regulatory PyrI chains organized as three dimers (R2).

The catalysed reaction is carbamoyl phosphate + L-aspartate = N-carbamoyl-L-aspartate + phosphate + H(+). The protein operates within pyrimidine metabolism; UMP biosynthesis via de novo pathway; (S)-dihydroorotate from bicarbonate: step 2/3. Its function is as follows. Catalyzes the condensation of carbamoyl phosphate and aspartate to form carbamoyl aspartate and inorganic phosphate, the committed step in the de novo pyrimidine nucleotide biosynthesis pathway. In Oenococcus oeni (strain ATCC BAA-331 / PSU-1), this protein is Aspartate carbamoyltransferase catalytic subunit.